Consider the following 788-residue polypeptide: Ribonucleoside-diphosphate reductase subunit alpha (788 aa).

The ATP-cone domain occupies 2 to 92 (ITVVKRNGRI…LYDLYHKVSG (91 aa)). ATP-binding positions include Lys6, 12–18 (EPLDITK), and Thr52. Position 200 (Thr200) interacts with GDP. Cys216 and Cys497 are oxidised to a cystine. DTTP-binding positions include 223–225 (DNI) and Arg253. Position 424 (Asn424) interacts with GDP. Asn424 functions as the Proton acceptor in the catalytic mechanism. Cys426 functions as the Cysteine radical intermediate in the catalytic mechanism. GDP contacts are provided by residues Glu428 and 661–663 (SSI). Glu428 (proton acceptor) is an active-site residue.

Belongs to the ribonucleoside diphosphate reductase large chain family. As to quaternary structure, tetramer of two alpha and two beta subunits.

The enzyme catalyses a 2'-deoxyribonucleoside 5'-diphosphate + [thioredoxin]-disulfide + H2O = a ribonucleoside 5'-diphosphate + [thioredoxin]-dithiol. Its activity is regulated as follows. Under complex allosteric control mediated by deoxynucleoside triphosphates and ATP binding to separate specificity and activation sites on the alpha subunit. The type of nucleotide bound at the specificity site determines substrate preference. It seems probable that ATP makes the enzyme reduce CDP and UDP, dGTP favors ADP reduction and dTTP favors GDP reduction. Stimulated by ATP and inhibited by dATP binding to the activity site. Its function is as follows. Provides the precursors necessary for DNA synthesis. Catalyzes the biosynthesis of deoxyribonucleotides from the corresponding ribonucleotides. This is Ribonucleoside-diphosphate reductase subunit alpha (nrdA) from Helicobacter pylori (strain ATCC 700392 / 26695) (Campylobacter pylori).